We begin with the raw amino-acid sequence, 341 residues long: S-adenosylmethionine:tRNA ribosyltransferase-isomerase (341 aa).

The protein belongs to the QueA family. As to quaternary structure, monomer.

It is found in the cytoplasm. It catalyses the reaction 7-aminomethyl-7-carbaguanosine(34) in tRNA + S-adenosyl-L-methionine = epoxyqueuosine(34) in tRNA + adenine + L-methionine + 2 H(+). The protein operates within tRNA modification; tRNA-queuosine biosynthesis. In terms of biological role, transfers and isomerizes the ribose moiety from AdoMet to the 7-aminomethyl group of 7-deazaguanine (preQ1-tRNA) to give epoxyqueuosine (oQ-tRNA). This is S-adenosylmethionine:tRNA ribosyltransferase-isomerase from Clostridium botulinum (strain ATCC 19397 / Type A).